A 359-amino-acid chain; its full sequence is Serine hydrolase-like protein DDB_G0286239 (359 aa).

In terms of domain architecture, AB hydrolase-1 spans 38–289 (LALHGWLDNA…VPGSHHFHME (252 aa)). Residue serine 111 is part of the active site. The interval 310–359 (FTPSSTTQQQQQQQQSAENKKGDNHNQIAEQDLSTSNTSSPIISKPKPNL) is disordered. Positions 334-351 (HNQIAEQDLSTSNTSSPI) are enriched in polar residues.

This sequence belongs to the AB hydrolase superfamily.

Probable serine hydrolase. The polypeptide is Serine hydrolase-like protein DDB_G0286239 (Dictyostelium discoideum (Social amoeba)).